A 2332-amino-acid chain; its full sequence is Phosphatidylinositol phosphatase PTPRQ (2332 aa).

The N-terminal stretch at 1–35 (MKKVPIKPEQPEKLRAFNISTHSFSLHWSLPSGHV) is a signal peptide. Fibronectin type-III domains lie at 36–99 (ERYQ…TKPG), 100–195 (PPVF…TAES), 199–294 (KVVN…SSST), 350–438 (PPQN…PPDV), 441–539 (AVFD…SHPD), 514–606 (GLYE…SVRT), 610–705 (VPSS…TSED), 710–799 (SPQD…TSET), 804–894 (APEN…TEED), 899–988 (PPQD…TPEG), 993–1093 (PPKD…TDQD), 1098–1190 (FVGN…TEED), 1192–1282 (PETS…TDES), 1287–1380 (PPQN…TQES), 1384–1470 (VVQN…LPET), 1474–1578 (VPTN…TLPG), 1583–1681 (PPEN…TLES), and 1686–1787 (PPNN…IKAP). Topologically, residues 36–1947 (ERYQVDLVPD…GEGLSERTVE (1912 aa)) are extracellular. N-linked (GlcNAc...) asparagine glycosylation is present at Asn94. 2 N-linked (GlcNAc...) asparagine glycosylation sites follow: Asn202 and Asn394. Residues Asn944, Asn1038, Asn1080, and Asn1101 are each glycosylated (N-linked (GlcNAc...) asparagine). N-linked (GlcNAc...) asparagine glycans are attached at residues Asn1290 and Asn1295. N-linked (GlcNAc...) asparagine glycosylation occurs at Asn1844. A helical membrane pass occupies residues 1948–1968 (IILSVTLCILSIILLGTAIFA). Over 1969-2332 (FARIRQKQKE…VELEWEETTM (364 aa)) the chain is Cytoplasmic. Residues 2036–2292 (FQEEFSELPK…IFLHQCILDL (257 aa)) form the Tyrosine-protein phosphatase domain. The active-site Phosphocysteine intermediate is the Cys2233.

The protein belongs to the protein-tyrosine phosphatase family. Receptor class 2A subfamily. Interacts with TPRN. TPRN, CLIC5 and PTPQR form concentric rings at the base of stereocilia and may form a complex. In developing kidney, it localizes to the basal membrane of podocytes, beginning when podocyte progenitors can first be identified in the embryonic kidney (at protein level). Expressed in lung and kidney.

The protein localises to the cell projection. It is found in the stereocilium. The protein resides in the apical cell membrane. Its subcellular location is the basal cell membrane. It carries out the reaction a 1,2-diacyl-sn-glycero-3-phospho-(1D-myo-inositol-3,4,5-trisphosphate) + H2O = a 1,2-diacyl-sn-glycero-3-phospho-(1D-myo-inositol-4,5-bisphosphate) + phosphate. The enzyme catalyses a 1,2-diacyl-sn-glycero-3-phospho-(1D-myo-inositol-3,4,5-trisphosphate) + H2O = a 1,2-diacyl-sn-glycero-3-phospho-(1D-myo-inositol-3,4-bisphosphate) + phosphate. It catalyses the reaction a 1,2-diacyl-sn-glycero-3-phospho-(1D-myo-inositol-3,5-bisphosphate) + H2O = a 1,2-diacyl-sn-glycero-3-phospho-(1D-myo-inositol-5-phosphate) + phosphate. The catalysed reaction is a 1,2-diacyl-sn-glycero-3-phospho-(1D-myo-inositol-3,5-bisphosphate) + H2O = a 1,2-diacyl-sn-glycero-3-phospho-(1D-myo-inositol-3-phosphate) + phosphate. Its function is as follows. Dephosphorylates phosphatidylinositol phosphates, such as phosphatidylinositol 3,4,5-trisphosphate (PIP3) and phosphatidylinositol 3,5-diphosphates, with preference for PIP3. Phosphate can be hydrolyzed from the D3 and D5 positions in the inositol ring. Has low tyrosine-protein phosphatase activity in vitro; however, the relevance of such activity in vivo is unclear. Plays an important role in adipogenesis of mesenchymal stem cells (MSCs). Regulates the phosphorylation state of AKT1 by regulating the levels of PIP3 in MSCs and preadipocyte cells. Required for hair bundle maturation, a process that enables hair cells to detect and transmit sound and balance signals effectively, therefore affecting auditory function. May act by regulating the level of phosphatidylinositol 4,5-bisphosphate (PIP2) level in the basal region of hair bundles. This Homo sapiens (Human) protein is Phosphatidylinositol phosphatase PTPRQ (PTPRQ).